Here is a 156-residue protein sequence, read N- to C-terminus: Small ribosomal subunit protein uS7 (156 aa).

This sequence belongs to the universal ribosomal protein uS7 family. As to quaternary structure, part of the 30S ribosomal subunit. Contacts proteins S9 and S11.

In terms of biological role, one of the primary rRNA binding proteins, it binds directly to 16S rRNA where it nucleates assembly of the head domain of the 30S subunit. Is located at the subunit interface close to the decoding center, probably blocks exit of the E-site tRNA. This is Small ribosomal subunit protein uS7 from Beijerinckia indica subsp. indica (strain ATCC 9039 / DSM 1715 / NCIMB 8712).